The chain runs to 278 residues: MSSRSSRTIYVGNLPGDIREREVEDLFSKYGPVVQIDLKIPPRPPGYAFVEFEDARDADDAIYGRDGYDFDGHHLRVELAHGGRRSSHDARGSYSGRGRGGRGGGDGGGRERGPSRRSEYRVVVSGLPSSASWQDLKDHMRKGGEVCFSQVFRDGRGTTGIVDYTSYEDMKYALDDTEFRNAFSHEYVRVREYDSRRDSRSPSRGRSYSKSRSRGRSPSRSRSRSRSRSKSRSPKAKSLRRSPAKSTSRSPRSRSRSKSRSLSPRGWVTVERHWIALI.

Residues 7–82 enclose the RRM 1 domain; sequence RTIYVGNLPG…HHLRVELAHG (76 aa). The span at 81 to 91 shows a compositional bias: basic and acidic residues; that stretch reads HGGRRSSHDAR. 2 disordered regions span residues 81–121 and 192–263; these read HGGR…SEYR and EYDS…RSLS. Residues 95 to 107 show a composition bias toward gly residues; that stretch reads SGRGRGGRGGGDG. Basic and acidic residues-rich tracts occupy residues 108-120 and 192-201; these read GGRE…RSEY and EYDSRRDSRS. An RRM 2 domain is found at 120 to 195; sequence YRVVVSGLPS…EYVRVREYDS (76 aa). Residues S201, S203, S225, S231, S233, S242, S250, S259, and S263 each carry the phosphoserine modification. Positions 207 to 243 are enriched in basic residues; that stretch reads SYSKSRSRGRSPSRSRSRSRSRSKSRSPKAKSLRRSP.

The protein belongs to the splicing factor SR family. SR subfamily. Component of the spliceosome.

It localises to the nucleus speckle. The protein localises to the nucleus. It is found in the nucleoplasm. Probably involved in intron recognition and spliceosome assembly. This is Serine/arginine-rich splicing factor SR34B (SR34B) from Arabidopsis thaliana (Mouse-ear cress).